A 297-amino-acid chain; its full sequence is Glutamyl-Q tRNA(Asp) synthetase (297 aa).

L-glutamate contacts are provided by residues 9-13 (RFAPS) and E45. A 'HIGH' region motif is present at residues 12–22 (PSPTGPLHFGS). Zn(2+) is bound by residues C101, C103, and C118. Residues Y170 and R188 each contribute to the L-glutamate site. The 'KMSKS' region motif lies at 226–230 (KLSKS). ATP is bound at residue K229.

The protein belongs to the class-I aminoacyl-tRNA synthetase family. GluQ subfamily. Zn(2+) serves as cofactor.

Functionally, catalyzes the tRNA-independent activation of glutamate in presence of ATP and the subsequent transfer of glutamate onto a tRNA(Asp). Glutamate is transferred on the 2-amino-5-(4,5-dihydroxy-2-cyclopenten-1-yl) moiety of the queuosine in the wobble position of the QUC anticodon. This Xanthomonas campestris pv. campestris (strain 8004) protein is Glutamyl-Q tRNA(Asp) synthetase.